An 86-amino-acid polypeptide reads, in one-letter code: Toxin Tpa4 (86 aa).

A signal peptide spans 1–19 (MNYFVLIAVACLLTAGTES). The region spanning 21 to 82 (KDGYPLEYDN…EPIKTSGRCR (62 aa)) is the LCN-type CS-alpha/beta domain. Intrachain disulfides connect C31/C81, C35/C57, C43/C64, and C47/C66. Residue P83 is modified to Proline amide.

This sequence belongs to the long (4 C-C) scorpion toxin superfamily. Sodium channel inhibitor family. Alpha subfamily. Expressed by the venom gland.

The protein localises to the secreted. Its function is as follows. Alpha toxins bind voltage-independently at site-3 of sodium channels (Nav) and inhibit the inactivation of the activated channels, thereby blocking neuronal transmission. The polypeptide is Toxin Tpa4 (Tityus pachyurus (Colombian scorpion)).